The following is a 1360-amino-acid chain: DNA-directed RNA polymerase subunit beta (1360 aa).

Belongs to the RNA polymerase beta chain family. As to quaternary structure, the RNAP catalytic core consists of 2 alpha, 1 beta, 1 beta' and 1 omega subunit. When a sigma factor is associated with the core the holoenzyme is formed, which can initiate transcription.

The enzyme catalyses RNA(n) + a ribonucleoside 5'-triphosphate = RNA(n+1) + diphosphate. DNA-dependent RNA polymerase catalyzes the transcription of DNA into RNA using the four ribonucleoside triphosphates as substrates. The chain is DNA-directed RNA polymerase subunit beta from Caulobacter sp. (strain K31).